The chain runs to 825 residues: 5-methyltetrahydropteroyltriglutamate--homocysteine methyltransferase (825 aa).

Residues K19 and N148 each contribute to the 5-methyltetrahydropteroyltri-L-glutamate site. L-homocysteine-binding positions include 498-500 and E551; that span reads IGS. L-methionine is bound by residues 498–500 and E551; that span reads IGS. Residues D556, Y579, 582 to 583, and W628 each bind 5-methyltetrahydropteroyltri-L-glutamate; that span reads RC. D666 contacts L-homocysteine. An L-methionine-binding site is contributed by D666. Positions 708, 710, and 732 each coordinate Zn(2+). The active-site Proton donor is the H761. C793 serves as a coordination point for Zn(2+).

It belongs to the vitamin-B12 independent methionine synthase family. Zn(2+) serves as cofactor.

The enzyme catalyses 5-methyltetrahydropteroyltri-L-glutamate + L-homocysteine = tetrahydropteroyltri-L-glutamate + L-methionine. Its pathway is amino-acid biosynthesis; L-methionine biosynthesis via de novo pathway; L-methionine from L-homocysteine (MetE route): step 1/1. Its function is as follows. Catalyzes the transfer of a methyl group from 5-methyltetrahydrofolate to homocysteine resulting in methionine formation. This Dictyostelium discoideum (Social amoeba) protein is 5-methyltetrahydropteroyltriglutamate--homocysteine methyltransferase (metE).